The chain runs to 184 residues: FMRFamide-related peptides (184 aa).

The propeptide occupies 1 to 44 (MLVSSSVLKDDSSLRIFKESPNEFEYIIKRHDMDDRKEDTESKE). Phe56 is modified (phenylalanine amide). The propeptide occupies 59-83 (GQSFFNNLDNSAFDNEIDSKVSRHP). The residue at position 94 (Phe94) is a Phenylalanine amide. A propeptide spanning residues 97–107 (SGMKSTNDEQP) is cleaved from the precursor. A Phenylalanine amide modification is found at Phe119. The propeptide occupies 122–184 (NIQIVPTDFD…SLETNSNHRE (63 aa)).

It belongs to the FARP (FMRFamide related peptide) family. As to expression, expressed throughout the central nervous system.

It is found in the secreted. Its function is as follows. In insects, FMRFamide and related peptides have modulatory actions at skeletal neuromuscular junctions, and peptides that are immunologically related to FMRFamide are released into the circulation from neurohemal organs. This chain is FMRFamide-related peptides, found in Camponotus floridanus (Florida carpenter ant).